The sequence spans 237 residues: Uridylate kinase (237 aa).

11–14 (KLSG) is a binding site for ATP. Residues 18–23 (GGGGIG) are involved in allosteric activation by GTP. Residue Gly52 coordinates UMP. ATP-binding residues include Gly53 and Arg57. UMP is bound by residues Asp72 and 133–140 (SGMPYFST). Residues Gln161, Tyr167, and Asp170 each coordinate ATP.

Belongs to the UMP kinase family. In terms of assembly, homohexamer.

The protein resides in the cytoplasm. It carries out the reaction UMP + ATP = UDP + ADP. Its pathway is pyrimidine metabolism; CTP biosynthesis via de novo pathway; UDP from UMP (UMPK route): step 1/1. With respect to regulation, allosterically activated by GTP. Inhibited by UTP. Functionally, catalyzes the reversible phosphorylation of UMP to UDP. The protein is Uridylate kinase of Cutibacterium acnes (strain DSM 16379 / KPA171202) (Propionibacterium acnes).